Consider the following 276-residue polypeptide: NAD-capped RNA hydrolase NudC (276 aa).

Substrate is bound at residue Arg82. The Zn(2+) site is built by Cys112 and Cys115. Residue Glu125 participates in substrate binding. Zn(2+) contacts are provided by Cys130 and Cys133. A substrate-binding site is contributed by Tyr138. Residues 139–262 enclose the Nudix hydrolase domain; it reads PRISPSMIVL…SIARYLIDLY (124 aa). Ala172, Glu188, and Glu192 together coordinate a divalent metal cation. The Nudix box motif lies at 173–194; sequence GFAEPGESAEDCLVREVREEVA. A substrate-binding site is contributed by 206–213; sequence QCWPFPHS. An a divalent metal cation-binding site is contributed by Glu233. Substrate is bound at residue Ala255.

The protein belongs to the Nudix hydrolase family. NudC subfamily. In terms of assembly, homodimer. Requires Mg(2+) as cofactor. Mn(2+) serves as cofactor. Zn(2+) is required as a cofactor.

It catalyses the reaction a 5'-end NAD(+)-phospho-ribonucleoside in mRNA + H2O = a 5'-end phospho-adenosine-phospho-ribonucleoside in mRNA + beta-nicotinamide D-ribonucleotide + 2 H(+). The enzyme catalyses NAD(+) + H2O = beta-nicotinamide D-ribonucleotide + AMP + 2 H(+). The catalysed reaction is NADH + H2O = reduced beta-nicotinamide D-ribonucleotide + AMP + 2 H(+). In terms of biological role, mRNA decapping enzyme that specifically removes the nicotinamide adenine dinucleotide (NAD) cap from a subset of mRNAs by hydrolyzing the diphosphate linkage to produce nicotinamide mononucleotide (NMN) and 5' monophosphate mRNA. The NAD-cap is present at the 5'-end of some mRNAs and stabilizes RNA against 5'-processing. Has preference for mRNAs with a 5'-end purine. Catalyzes the hydrolysis of a broad range of dinucleotide pyrophosphates. The sequence is that of NAD-capped RNA hydrolase NudC from Pseudomonas putida (strain GB-1).